We begin with the raw amino-acid sequence, 101 residues long: NAD(P)H-quinone oxidoreductase subunit 4L, chloroplastic (101 aa).

The next 3 helical transmembrane spans lie at 2–22, 32–52, and 61–81; these read MFEHVLFLSVYLFSIGIYGLI, ICLELILNSINLNLVTFSDLF, and IFAIFVIALAAAEAAIGLSIL.

It belongs to the complex I subunit 4L family. As to quaternary structure, NDH is composed of at least 16 different subunits, 5 of which are encoded in the nucleus.

The protein resides in the plastid. It localises to the chloroplast thylakoid membrane. The catalysed reaction is a plastoquinone + NADH + (n+1) H(+)(in) = a plastoquinol + NAD(+) + n H(+)(out). The enzyme catalyses a plastoquinone + NADPH + (n+1) H(+)(in) = a plastoquinol + NADP(+) + n H(+)(out). NDH shuttles electrons from NAD(P)H:plastoquinone, via FMN and iron-sulfur (Fe-S) centers, to quinones in the photosynthetic chain and possibly in a chloroplast respiratory chain. The immediate electron acceptor for the enzyme in this species is believed to be plastoquinone. Couples the redox reaction to proton translocation, and thus conserves the redox energy in a proton gradient. The sequence is that of NAD(P)H-quinone oxidoreductase subunit 4L, chloroplastic from Oryza nivara (Indian wild rice).